The chain runs to 246 residues: Ubiquinone/menaquinone biosynthesis C-methyltransferase UbiE (246 aa).

S-adenosyl-L-methionine is bound by residues Thr-75, Asp-95, and 119-120 (DA).

It belongs to the class I-like SAM-binding methyltransferase superfamily. MenG/UbiE family.

The enzyme catalyses a 2-demethylmenaquinol + S-adenosyl-L-methionine = a menaquinol + S-adenosyl-L-homocysteine + H(+). The catalysed reaction is a 2-methoxy-6-(all-trans-polyprenyl)benzene-1,4-diol + S-adenosyl-L-methionine = a 5-methoxy-2-methyl-3-(all-trans-polyprenyl)benzene-1,4-diol + S-adenosyl-L-homocysteine + H(+). The protein operates within quinol/quinone metabolism; menaquinone biosynthesis; menaquinol from 1,4-dihydroxy-2-naphthoate: step 2/2. It participates in cofactor biosynthesis; ubiquinone biosynthesis. Functionally, methyltransferase required for the conversion of demethylmenaquinol (DMKH2) to menaquinol (MKH2) and the conversion of 2-polyprenyl-6-methoxy-1,4-benzoquinol (DDMQH2) to 2-polyprenyl-3-methyl-6-methoxy-1,4-benzoquinol (DMQH2). This Desulfotalea psychrophila (strain LSv54 / DSM 12343) protein is Ubiquinone/menaquinone biosynthesis C-methyltransferase UbiE.